The sequence spans 144 residues: Large ribosomal subunit protein uL11 (144 aa).

Belongs to the universal ribosomal protein uL11 family. In terms of assembly, part of the ribosomal stalk of the 50S ribosomal subunit. Interacts with L10 and the large rRNA to form the base of the stalk. L10 forms an elongated spine to which L12 dimers bind in a sequential fashion forming a multimeric L10(L12)X complex. Post-translationally, one or more lysine residues are methylated.

Forms part of the ribosomal stalk which helps the ribosome interact with GTP-bound translation factors. The protein is Large ribosomal subunit protein uL11 of Legionella pneumophila (strain Paris).